The primary structure comprises 396 residues: Probable circularly permuted 1,3-beta-glucanase YJL171C (396 aa).

The N-terminal stretch at 1-19 (MLQSIVLSVCMFMLHTVAA) is a signal peptide. 7 N-linked (GlcNAc...) asparagine glycosylation sites follow: N51, N99, N122, N146, N174, N219, and N249. Residues 259–264 (EYDIFE) carry the ExDxxE motif motif. Residues N267, N300, N328, and N346 are each glycosylated (N-linked (GlcNAc...) asparagine). Residue N368 is the site of GPI-anchor amidated asparagine attachment. Residues 369 to 396 (GVALTKMQNGVWYYILAIFTAFTQVVLI) constitute a propeptide, removed in mature form.

The protein belongs to the PGA52 family. Post-translationally, extensively N-glycosylated.

The protein localises to the cell membrane. The enzyme catalyses Hydrolysis of (1-&gt;3)-beta-D-glucosidic linkages in (1-&gt;3)-beta-D-glucans.. Functionally, probable circularly permuted 1,3-beta-glucanase involved in cell wall modification through beta-1,3-glucan network alterations such as increased branching or remodeling. In Saccharomyces cerevisiae (strain ATCC 204508 / S288c) (Baker's yeast), this protein is Probable circularly permuted 1,3-beta-glucanase YJL171C (TOH1).